The primary structure comprises 287 residues: Melatonin receptor type 1B-A (287 aa).

Topologically, residues 1-28 are extracellular; the sequence is MPENVSLIRNRTEVGQGRAWGSGAGARP. Asparagine 4 and asparagine 10 each carry an N-linked (GlcNAc...) asparagine glycan. The helical transmembrane segment at 29–49 threads the bilayer; it reads AWVVMVLAGVLIFTSVVDVLG. Residues 50 to 69 lie on the Cytoplasmic side of the membrane; that stretch reads NVLVIISVLRNRKLRNAGNA. Residues 70-90 form a helical membrane-spanning segment; the sequence is FVVSLAFADLLVVCYPYPLVL. At 91–107 the chain is on the extracellular side; it reads HAMLHAGWLPGEMECKV. A disulfide bond links cysteine 105 and cysteine 182. The chain crosses the membrane as a helical span at residues 108–128; the sequence is SGFLMGASVIGSIFNITAIAI. The Cytoplasmic segment spans residues 129 to 149; the sequence is NRYCFICQANTYEKIYGRAGT. The helical transmembrane segment at 150-170 threads the bilayer; the sequence is LVLLTLVWVLTAIAILPNLSL. The Extracellular portion of the chain corresponds to 171–192; the sequence is GSLTYDPRVYSCTFSQTTSAGY. The chain crosses the membrane as a helical span at residues 193-213; sequence TIAVVTVHFLLPIAVVTFCYL. The Cytoplasmic portion of the chain corresponds to 214–245; the sequence is RIWVLVLRVRRRVTTDVRPRLRPSELRHFLTM. A helical transmembrane segment spans residues 246 to 266; the sequence is FVVFVLFAVCWAPLNLIGLAV. At 267–275 the chain is on the extracellular side; it reads AVDPPRVGP. The helical transmembrane segment at 276 to 287 threads the bilayer; it reads LVPDWLFVMSYF.

It belongs to the G-protein coupled receptor 1 family.

The protein localises to the cell membrane. In terms of biological role, high affinity receptor for melatonin. The activity of this receptor is mediated by pertussis toxin sensitive G proteins that inhibits adenylate cyclase activity. This chain is Melatonin receptor type 1B-A (mtnr1ba), found in Danio rerio (Zebrafish).